Reading from the N-terminus, the 128-residue chain is Large ribosomal subunit protein bL17 (128 aa).

Belongs to the bacterial ribosomal protein bL17 family. Part of the 50S ribosomal subunit. Contacts protein L32.

The sequence is that of Large ribosomal subunit protein bL17 from Streptococcus agalactiae serotype Ia (strain ATCC 27591 / A909 / CDC SS700).